The sequence spans 423 residues: AP-1 complex subunit mu-1 (423 aa).

Serine 2 bears the N-acetylserine mark. Phosphothreonine is present on residues threonine 152, threonine 154, and threonine 223. One can recognise an MHD domain in the interval 168–421 (KNEVFLDVIE…ITQNGDYQLR (254 aa)).

Belongs to the adaptor complexes medium subunit family. Adaptor protein complex 1 (AP-1) is a heterotetramer composed of two large adaptins (gamma-type subunit AP1G1 and beta-type subunit AP1B1), a medium adaptin (mu-type subunit AP1M1 or AP1M2) and a small adaptin (sigma-type subunit AP1S1 or AP1S2 or AP1S3). Interacts with MARCHF11. Post-translationally, phosphorylation of membrane-bound AP1M1/AP1M2 increases its affinity for sorting signals.

Its subcellular location is the cytoplasmic vesicle. It is found in the clathrin-coated vesicle membrane. The protein resides in the golgi apparatus. In terms of biological role, subunit of clathrin-associated adaptor protein complex 1 that plays a role in protein sorting in the trans-Golgi network (TGN) and endosomes. The AP complexes mediate the recruitment of clathrin to membranes and the recognition of sorting signals within the cytosolic tails of transmembrane cargo molecules. This Bos taurus (Bovine) protein is AP-1 complex subunit mu-1.